The primary structure comprises 131 residues: Small ribosomal subunit protein uS8 (131 aa).

Belongs to the universal ribosomal protein uS8 family. In terms of assembly, part of the 30S ribosomal subunit. Contacts proteins S5 and S12.

Its function is as follows. One of the primary rRNA binding proteins, it binds directly to 16S rRNA central domain where it helps coordinate assembly of the platform of the 30S subunit. The polypeptide is Small ribosomal subunit protein uS8 (Dictyoglomus thermophilum (strain ATCC 35947 / DSM 3960 / H-6-12)).